A 379-amino-acid chain; its full sequence is Histone-lysine N-methyltransferase ATXR5 (379 aa).

Over residues 1-15 (MATWNASSPAASPCS) the composition is skewed to low complexity. The segment at 1–42 (MATWNASSPAASPCSSRRRTKAPARRPSSESPPPRKMKSMAE) is disordered. Residues 1-44 (MATWNASSPAASPCSSRRRTKAPARRPSSESPPPRKMKSMAEIM) constitute a chloroplast transit peptide. Residues 64–114 (NVTCEKCGSGEGDDELLLCDKCDRGFHMKCLRPIVVRVPIGTWLCVDCSDQ) form a PHD-type zinc finger. A PIP motif motif is present at residues 122-129 (QKKILHFF). Methionine 221 is a substrate binding site. The region spanning 245–367 (PPLVVVFDPL…KGERLYYDYN (123 aa)) is the SET domain. S-adenosyl-L-methionine is bound by residues 255-257 (EGY) and 317-321 (RFING). Arginine 339 contacts substrate. Residue tyrosine 366 participates in S-adenosyl-L-methionine binding. 369-370 (YE) lines the substrate pocket. Residue tyrosine 373 participates in S-adenosyl-L-methionine binding.

It belongs to the class V-like SAM-binding methyltransferase superfamily. Histone-lysine methyltransferase family. TRX/MLL subfamily. Isoform 1 but not isoform 2 interacts with PCNA1 and PCNA2. Interacts (via PHD domain) with HTR1 (via N-terminus). Isoform 2 interacts with IPS1. Expressed in leaves, roots, stems, flowers, siliques and developing pollen. Up-regulated in tissues where cell division is active.

Its subcellular location is the nucleus. The protein localises to the plastid. It is found in the chloroplast. The catalysed reaction is L-lysyl(27)-[histone H3] + S-adenosyl-L-methionine = N(6)-methyl-L-lysyl(27)-[histone H3] + S-adenosyl-L-homocysteine + H(+). Histone methyltransferase that specifically monomethylates 'Lys-27' of histone H3 (H3K27me1). Has much higher activity on nucleosomes containing H3.1 than H3.3. Involved in the formation of constitutive heterochromatin and the silencing of heterochromatic elements. Influences which sets of rRNA gene variants are expressed or silenced. The sequence is that of Histone-lysine N-methyltransferase ATXR5 (ATXR5) from Arabidopsis thaliana (Mouse-ear cress).